The chain runs to 215 residues: Pyrrolidone-carboxylate peptidase (215 aa).

Residues Glu80, Cys143, and His167 contribute to the active site.

It belongs to the peptidase C15 family. Homotetramer.

The protein resides in the cytoplasm. It carries out the reaction Release of an N-terminal pyroglutamyl group from a polypeptide, the second amino acid generally not being Pro.. In terms of biological role, removes 5-oxoproline from various penultimate amino acid residues except L-proline. This is Pyrrolidone-carboxylate peptidase from Bacillus cytotoxicus (strain DSM 22905 / CIP 110041 / 391-98 / NVH 391-98).